The sequence spans 148 residues: Small ribosomal subunit protein bS6 (148 aa).

The disordered stretch occupies residues 97–148; that stretch reads EEGPSAMLQRRDDRERGDRGDRGPRRDFDDRGPRRPREDDRPRRSREDEGDE.

Belongs to the bacterial ribosomal protein bS6 family.

Functionally, binds together with bS18 to 16S ribosomal RNA. The polypeptide is Small ribosomal subunit protein bS6 (Chelativorans sp. (strain BNC1)).